The following is a 333-amino-acid chain: Nucleoid-associated protein (333 aa).

This sequence belongs to the YejK family.

It localises to the cytoplasm. Its subcellular location is the nucleoid. This Metapseudomonas resinovorans (Pseudomonas resinovorans) protein is Nucleoid-associated protein.